Here is a 958-residue protein sequence, read N- to C-terminus: Structure-specific endonuclease subunit SLX4 (958 aa).

Disordered regions lie at residues 89 to 123, 183 to 209, 326 to 400, 531 to 589, 594 to 613, and 655 to 849; these read AESP…KGKT, QKKA…GPID, LATA…LSPT, DLTI…EQHQ, QSNT…SFEL, and STAA…SPPA. Residues 109–121 show a composition bias toward basic residues; that stretch reads KKPRTAGARKKKG. The span at 332–341 shows a compositional bias: basic and acidic residues; that stretch reads RRPEEAERST. Residues 342 to 351 are compositionally biased toward polar residues; the sequence is LSRQQDTHIP. Positions 364–373 are enriched in low complexity; that stretch reads AASKSASAKP. The span at 374–389 shows a compositional bias: basic residues; the sequence is KAAKKAPKPRATKKKQ. A compositionally biased stretch (pro residues) spans 600–610; it reads QPQPAPPPPPS. Composition is skewed to low complexity over residues 655–666, 775–787, and 821–838; these read STAAQAAMSTSA, TTSP…RAKA, and PDSG…SSPD.

Belongs to the SLX4 family. In terms of assembly, forms a heterodimer with SLX1. Phosphorylated in response to DNA damage.

It is found in the nucleus. In terms of biological role, regulatory subunit of the SLX1-SLX4 structure-specific endonuclease that resolves DNA secondary structures generated during DNA repair and recombination. Has endonuclease activity towards branched DNA substrates, introducing single-strand cuts in duplex DNA close to junctions with ss-DNA. The protein is Structure-specific endonuclease subunit SLX4 of Chaetomium globosum (strain ATCC 6205 / CBS 148.51 / DSM 1962 / NBRC 6347 / NRRL 1970) (Soil fungus).